A 74-amino-acid polypeptide reads, in one-letter code: Putative membrane protein insertion efficiency factor (74 aa).

This sequence belongs to the UPF0161 family.

The protein resides in the cell membrane. Its function is as follows. Could be involved in insertion of integral membrane proteins into the membrane. In Anoxybacillus flavithermus (strain DSM 21510 / WK1), this protein is Putative membrane protein insertion efficiency factor.